Consider the following 252-residue polypeptide: Imidazole glycerol phosphate synthase subunit HisF (252 aa).

Active-site residues include D11 and D130.

It belongs to the HisA/HisF family. Heterodimer of HisH and HisF.

Its subcellular location is the cytoplasm. The catalysed reaction is 5-[(5-phospho-1-deoxy-D-ribulos-1-ylimino)methylamino]-1-(5-phospho-beta-D-ribosyl)imidazole-4-carboxamide + L-glutamine = D-erythro-1-(imidazol-4-yl)glycerol 3-phosphate + 5-amino-1-(5-phospho-beta-D-ribosyl)imidazole-4-carboxamide + L-glutamate + H(+). It participates in amino-acid biosynthesis; L-histidine biosynthesis; L-histidine from 5-phospho-alpha-D-ribose 1-diphosphate: step 5/9. Its function is as follows. IGPS catalyzes the conversion of PRFAR and glutamine to IGP, AICAR and glutamate. The HisF subunit catalyzes the cyclization activity that produces IGP and AICAR from PRFAR using the ammonia provided by the HisH subunit. The sequence is that of Imidazole glycerol phosphate synthase subunit HisF from Thermococcus gammatolerans (strain DSM 15229 / JCM 11827 / EJ3).